The primary structure comprises 506 residues: Histidine ammonia-lyase (506 aa).

Residues 143–145 (ASG) constitute a cross-link (5-imidazolinone (Ala-Gly)). Ser144 carries the post-translational modification 2,3-didehydroalanine (Ser).

This sequence belongs to the PAL/histidase family. In terms of processing, contains an active site 4-methylidene-imidazol-5-one (MIO), which is formed autocatalytically by cyclization and dehydration of residues Ala-Ser-Gly.

Its subcellular location is the cytoplasm. The enzyme catalyses L-histidine = trans-urocanate + NH4(+). The protein operates within amino-acid degradation; L-histidine degradation into L-glutamate; N-formimidoyl-L-glutamate from L-histidine: step 1/3. The polypeptide is Histidine ammonia-lyase (Salmonella typhi).